The chain runs to 74 residues: Small ribosomal subunit protein eS17 (74 aa).

It belongs to the eukaryotic ribosomal protein eS17 family.

The protein is Small ribosomal subunit protein eS17 of Ignicoccus hospitalis (strain KIN4/I / DSM 18386 / JCM 14125).